Reading from the N-terminus, the 113-residue chain is MTKADIIESVYEKVGFSKKEAAEIVEMVFDTIKETLERGEKIKISGFGNFIVRDKKSRVGRNPQTGEEIEISARRVLTFRPSQVLKNALNGGVSDETEGADDDDDDEEGEGDE.

The tract at residues 88-113 (ALNGGVSDETEGADDDDDDEEGEGDE) is disordered. A compositionally biased stretch (acidic residues) spans 95 to 113 (DETEGADDDDDDEEGEGDE).

The protein belongs to the bacterial histone-like protein family. In terms of assembly, heterodimer of an alpha and a beta chain.

This protein is one of the two subunits of integration host factor, a specific DNA-binding protein that functions in genetic recombination as well as in transcriptional and translational control. This Anaeromyxobacter dehalogenans (strain 2CP-C) protein is Integration host factor subunit alpha.